The following is a 235-amino-acid chain: MKLSIGIFFGGLFGALGILIYLVAFGSDYWLLAKEIEKCSENQETGDNATHSVLLHHEGFFWRCWFNHAEEENSNTMENFWFTNQAPTKNCTHAYLSPFPQNRDNSNSTSYHSALVYRGFWNIFMLLGVVTAVIGGFLIICAAPFTNHRIYKAGGGLFITSGILFALVVVMHVFWVQSVSDIKGYTDTRQQDCSQFTVYVSFGWSFMLAPFGIFFCLFAGMLFLLVGHTIHVHTK.

Positions 1-33 (MKLSIGIFFGGLFGALGILIYLVAFGSDYWLLA) are cleaved as a signal peptide. Over 34–122 (KEIEKCSENQ…SALVYRGFWN (89 aa)) the chain is Extracellular. N-linked (GlcNAc...) asparagine glycosylation is found at N48, N90, and N107. Residues 123 to 143 (IFMLLGVVTAVIGGFLIICAA) traverse the membrane as a helical segment. The Cytoplasmic segment spans residues 144-155 (PFTNHRIYKAGG). A helical transmembrane segment spans residues 156-176 (GLFITSGILFALVVVMHVFWV). The Extracellular portion of the chain corresponds to 177–205 (QSVSDIKGYTDTRQQDCSQFTVYVSFGWS). The helical transmembrane segment at 206-226 (FMLAPFGIFFCLFAGMLFLLV) threads the bilayer. Over 227-235 (GHTIHVHTK) the chain is Cytoplasmic.

Belongs to the TMEM182 family.

It localises to the cell membrane. In terms of biological role, may negatively regulate myogenesis and skeletal muscle regeneration. The chain is Transmembrane protein 182 (tmem182) from Xenopus tropicalis (Western clawed frog).